Consider the following 1137-residue polypeptide: Dendrite extension defective protein 1 (1137 aa).

Positions 1–41 are cleaved as a signal peptide; that stretch reads MLAHTHRINKCLYGQNQMRNRHALLGALPPIFLLLLPLISC. Residues 43-1005 are Extracellular-facing; that stretch reads KFDPERIAAR…HAEEQSPRLA (963 aa). Residues 163–302 enclose the NIDO 1 domain; it reads PFWNRNDLRN…GEWMFELSEL (140 aa). Residues N240 and N416 are each glycosylated (N-linked (GlcNAc...) asparagine). One can recognise an EGF-like; calcium-binding domain in the interval 409 to 450; it reads DVDECKTNSTICHKNAICTNTPGRYFCMCKEGFSGDGQNDCS. Cystine bridges form between C413-C426, C420-C435, and C437-C449. Positions 519–659 constitute an NIDO 2 domain; sequence PFFGPIDLSR…GTWLYRIDKA (141 aa). N571 carries an N-linked (GlcNAc...) asparagine glycan. Residues 738–749 show a composition bias toward polar residues; sequence IGNQQRQQTTKA. Disordered stretches follow at residues 738–765, 795–856, 878–897, 906–933, and 978–998; these read IGNQ…HRPI, FRPN…PFEA, QTTK…EDLS, TEED…TKAH, and NSQP…GHAE. N756 carries an N-linked (GlcNAc...) asparagine glycan. Residues 798 to 809 are compositionally biased toward polar residues; sequence NQRNGVQKSTQR. The span at 819–833 shows a compositional bias: basic and acidic residues; that stretch reads PLKEEATTSVPREKT. Over residues 906–915 the composition is skewed to acidic residues; the sequence is TEEDEEEAEI. Low complexity predominate over residues 916–933; the sequence is STETTTEMSSTTTTTKAH. The segment covering 978 to 992 has biased composition (polar residues); it reads NSQPPKQRNDNQPTV. Residues 1006–1026 traverse the membrane as a helical segment; that stretch reads ILLPVMIILAWLVILVCIGAV. Over 1027–1037 the chain is Cytoplasmic; it reads VCCKRRNSRES. The interval 1106–1125 is disordered; that stretch reads ARLSTQERQSPPSFVNNGYT.

May be proteolytically cleaved and secreted.

It is found in the membrane. The protein localises to the cell projection. It localises to the dendrite. Its subcellular location is the secreted. Along with dyf-7, enables neurite growth and maintenance by anchoring amphid dendritic tips during neuron cell body migration in embryonic and larval development. Promotes seam cell remodeling during the dauer phase. Plays a role in positively regulating locomotion during the dauer phase. The polypeptide is Dendrite extension defective protein 1 (Caenorhabditis elegans).